The primary structure comprises 1158 residues: ATP-dependent helicase/deoxyribonuclease subunit B (1158 aa).

Positions 1 to 275 constitute a UvrD-like helicase ATP-binding domain; that stretch reads MTLHAYLGRA…QYFNQLYRFN (275 aa). Residue 8 to 15 coordinates ATP; the sequence is GRAGTGKS. Residues 269-583 form the UvrD-like helicase C-terminal domain; it reads NQLYRFNNQD…SIGTMDLAKV (315 aa). Cys-784, Cys-1112, Cys-1115, and Cys-1121 together coordinate [4Fe-4S] cluster.

This sequence belongs to the helicase family. AddB/RexB type 1 subfamily. In terms of assembly, heterodimer of AddA and AddB. The cofactor is Mg(2+). [4Fe-4S] cluster serves as cofactor.

Its function is as follows. The heterodimer acts as both an ATP-dependent DNA helicase and an ATP-dependent, dual-direction single-stranded exonuclease. Recognizes the chi site generating a DNA molecule suitable for the initiation of homologous recombination. The AddB subunit has 5' -&gt; 3' nuclease activity but not helicase activity. The chain is ATP-dependent helicase/deoxyribonuclease subunit B from Staphylococcus aureus (strain MW2).